The following is a 658-amino-acid chain: DNA ligase (658 aa).

NAD(+) contacts are provided by residues Asp-32–Asp-36 and Ser-81–Leu-82. The N6-AMP-lysine intermediate role is filled by Lys-112. Positions 133, 167, and 306 each coordinate NAD(+). 4 residues coordinate Zn(2+): Cys-400, Cys-403, Cys-416, and Cys-421. The region spanning Glu-577–Asn-658 is the BRCT domain.

This sequence belongs to the NAD-dependent DNA ligase family. LigA subfamily. Mg(2+) serves as cofactor. Requires Mn(2+) as cofactor.

The enzyme catalyses NAD(+) + (deoxyribonucleotide)n-3'-hydroxyl + 5'-phospho-(deoxyribonucleotide)m = (deoxyribonucleotide)n+m + AMP + beta-nicotinamide D-nucleotide.. In terms of biological role, DNA ligase that catalyzes the formation of phosphodiester linkages between 5'-phosphoryl and 3'-hydroxyl groups in double-stranded DNA using NAD as a coenzyme and as the energy source for the reaction. It is essential for DNA replication and repair of damaged DNA. The polypeptide is DNA ligase (Helicobacter pylori (strain G27)).